Here is a 100-residue protein sequence, read N- to C-terminus: Urease subunit gamma (100 aa).

The protein belongs to the urease gamma subunit family. In terms of assembly, heterotrimer of UreA (gamma), UreB (beta) and UreC (alpha) subunits. Three heterotrimers associate to form the active enzyme.

It localises to the cytoplasm. It catalyses the reaction urea + 2 H2O + H(+) = hydrogencarbonate + 2 NH4(+). Its pathway is nitrogen metabolism; urea degradation; CO(2) and NH(3) from urea (urease route): step 1/1. This is Urease subunit gamma from Azoarcus sp. (strain BH72).